The chain runs to 126 residues: Muscarinic acetylcholine receptor M4 (126 aa).

Residues 1-90 (MKQSVKKPPP…LQPRTLNPAS (90 aa)) are disordered. Over 1-126 (MKQSVKKPPP…PAGMRPAANV (126 aa)) the chain is Cytoplasmic. Residues 28-39 (APPPVLPPPPRP) show a composition bias toward pro residues. The segment covering 47–57 (NESSSGSATQN) has biased composition (polar residues). Residues 64–75 (TELSTTEATTPA) are compositionally biased toward low complexity.

Belongs to the G-protein coupled receptor 1 family. Muscarinic acetylcholine receptor subfamily. CHRM4 sub-subfamily.

It is found in the cell membrane. The protein localises to the postsynaptic cell membrane. Functionally, the muscarinic acetylcholine receptor mediates various cellular responses, including inhibition of adenylate cyclase, breakdown of phosphoinositides and modulation of potassium channels through the action of G proteins. Primary transducing effect is inhibition of adenylate cyclase. May couple to multiple functional responses in cell lines. The polypeptide is Muscarinic acetylcholine receptor M4 (CHRM4) (Bos taurus (Bovine)).